The following is a 196-amino-acid chain: Autophagy-related protein 31 (196 aa).

The interval 20-45 (IKNNKGPSNDDQPAYNNESKSTDGSD) is disordered. The span at 22 to 43 (NNKGPSNDDQPAYNNESKSTDG) shows a compositional bias: polar residues. Phosphoserine is present on residues Ser38 and Ser40. Thr41 carries the post-translational modification Phosphothreonine. 2 positions are modified to phosphoserine: Ser44 and Ser116. Polar residues predominate over residues 120 to 129 (EENQMRTLSS). The tract at residues 120 to 145 (EENQMRTLSSHGDDKSNDEEEELSVD) is disordered. 6 positions are modified to phosphoserine: Ser135, Ser143, Ser146, Ser153, Ser174, and Ser195. Residues 135–144 (SNDEEEELSV) show a composition bias toward acidic residues.

As to quaternary structure, forms a stable complex with ATG17 and ATG29. Interacts directly with ATG29. The ATG17-ATG29-ATG31 complex interacts with the ATG1-ATG13 complex. Note=The interaction with the ATG1-ATG13 complex is induced by starvation. In terms of processing, highly phosphorylated. Ser-174 is phosphorylated constitutively. Phosphorylation at Ser-174 is required for autophagy induced by various autophagy stimuli such as nitrogen starvation and rapamycin treatment.

Its subcellular location is the cytoplasm. It localises to the cytoskeleton. The protein resides in the preautophagosomal structure. Plays a role in starvation-induced autophagy. Involved in mitophagy. Functions with ATG17 and ATG29 at the preautophagosomal structure (PAS) in order to form normal autophagosomes under starvation conditions. May be involved in microtubule function, such as chromosome segregation and karyogamy. The polypeptide is Autophagy-related protein 31 (ATG31) (Saccharomyces cerevisiae (strain ATCC 204508 / S288c) (Baker's yeast)).